Reading from the N-terminus, the 142-residue chain is MAKKVVGLVKLAINAGKANPAPPVGPALGQHGVNIMAFCKEYNERTKDQAGLIIPVEITVYEDRSFTFITKTPPASILLKKAANINSGSSEPNRKKVAQVSKTKVREIAETKMKDLNAASVEAAMSMVEGTARSMGITIVEG.

This sequence belongs to the universal ribosomal protein uL11 family. In terms of assembly, part of the ribosomal stalk of the 50S ribosomal subunit. Interacts with L10 and the large rRNA to form the base of the stalk. L10 forms an elongated spine to which L12 dimers bind in a sequential fashion forming a multimeric L10(L12)X complex. One or more lysine residues are methylated.

Its function is as follows. Forms part of the ribosomal stalk which helps the ribosome interact with GTP-bound translation factors. This Desulfitobacterium hafniense (strain DSM 10664 / DCB-2) protein is Large ribosomal subunit protein uL11.